The sequence spans 763 residues: Fibroblast growth factor receptor (763 aa).

Residues 1–27 (MKEFEVKVASTAFVLVLFSLTINQILA) form the signal peptide. Over 28–291 (SETSTKFRSP…ITKGIPNETN (264 aa)) the chain is Extracellular. The disordered stretch occupies residues 34–74 (FRSPVPAPTVPDWNHLPNEGNEENVVSAPKQDGASGGQKPY). Ig-like C2-type domains lie at 73-164 (PYWT…YQLD) and 173-270 (PILA…AWLS). Cys98 and Cys148 are oxidised to a cystine. 6 N-linked (GlcNAc...) asparagine glycosylation sites follow: Asn158, Asn182, Asn220, Asn230, Asn243, and Asn288. A disulfide bond links Cys195 and Cys254. The chain crosses the membrane as a helical span at residues 292–312 (IIIYVMCGVLVILFGLAVVLV). Residues 313-763 (LYYHCYNGKD…NEHARLRSEA (451 aa)) lie on the Cytoplasmic side of the membrane. Residues 382–672 (ITLVERLDEG…TLVEDLDRML (291 aa)) enclose the Protein kinase domain. Residues 388–396 (LDEGFFGQV) and Lys417 each bind ATP. Asp537 serves as the catalytic Proton acceptor. A Phosphotyrosine; by autocatalysis modification is found at Tyr568. Residues 691-711 (YSESSEDESESQNSDEEDDDS) are compositionally biased toward acidic residues. A disordered region spans residues 691–742 (YSESSEDESESQNSDEEDDDSVFERMRQIDSLSNGNIPFNEEDSSNSDPYVA).

Belongs to the protein kinase superfamily. Tyr protein kinase family. Fibroblast growth factor receptor subfamily.

It localises to the membrane. It catalyses the reaction L-tyrosyl-[protein] + ATP = O-phospho-L-tyrosyl-[protein] + ADP + H(+). Its function is as follows. Receptor for basic fibroblast growth factor. The chain is Fibroblast growth factor receptor (FGFR) from Halocynthia roretzi (Sea squirt).